A 391-amino-acid chain; its full sequence is Ferrochelatase (391 aa).

Fe cation contacts are provided by His-196 and Glu-281.

The protein belongs to the ferrochelatase family.

The protein resides in the cytoplasm. The enzyme catalyses heme b + 2 H(+) = protoporphyrin IX + Fe(2+). Its pathway is porphyrin-containing compound metabolism; protoheme biosynthesis; protoheme from protoporphyrin-IX: step 1/1. Catalyzes the ferrous insertion into protoporphyrin IX. The polypeptide is Ferrochelatase (Prochlorococcus marinus subsp. pastoris (strain CCMP1986 / NIES-2087 / MED4)).